Consider the following 381-residue polypeptide: 3-dehydroquinate synthase (381 aa).

Residues 81–86, 115–119, 139–140, Lys152, and Lys161 each bind NAD(+); these read EGESSK, GVIGD, and TS. The Zn(2+) site is built by Glu194, His256, and His274.

It belongs to the sugar phosphate cyclases superfamily. Dehydroquinate synthase family. The cofactor is Co(2+). Requires Zn(2+) as cofactor. NAD(+) serves as cofactor.

It localises to the cytoplasm. It catalyses the reaction 7-phospho-2-dehydro-3-deoxy-D-arabino-heptonate = 3-dehydroquinate + phosphate. It functions in the pathway metabolic intermediate biosynthesis; chorismate biosynthesis; chorismate from D-erythrose 4-phosphate and phosphoenolpyruvate: step 2/7. Its function is as follows. Catalyzes the conversion of 3-deoxy-D-arabino-heptulosonate 7-phosphate (DAHP) to dehydroquinate (DHQ). The sequence is that of 3-dehydroquinate synthase from Rhodopseudomonas palustris (strain TIE-1).